A 515-amino-acid chain; its full sequence is Cytochrome P450 monooxygenase mfmA (515 aa).

The helical transmembrane segment at 3–23 (KISIIPIVGVALSLAIILQLG) threads the bilayer. Cys453 contributes to the heme binding site.

Belongs to the cytochrome P450 family. Heme serves as cofactor.

The protein localises to the membrane. It functions in the pathway secondary metabolite biosynthesis; terpenoid biosynthesis. Functionally, cytochrome P450 monooxygenase; part of the gene cluster that mediates the biosynthesis of the phthalide-terpenoid hybrid 11'-O-desmethylfendlerol. Within the pathway, mfma and mfmC act together to convert 3,5-dimethylorsellinic acid (DMOA) into the phthalide 5,7-dihydroxy-4-(hydroxymethyl)-6-methylphthalide. MfmA performs especially an hydroxylation at C-9. The biosynthesis of 11'-O-desmethylfendlerol begins with the NR-PKS mfmB that forms 3,5-dimethylorsellinic acid (DMOA), which is then transformed into the phthalide 5,7-dihydroxy-4-(hydroxymethyl)-6-methylphthalide by the cytochrome P450 monooxygenase mfmA and the hydrolase mfmC. Subsequently, the methyltransferase mfmE catalyzes 7-O-methylation to yield 5-hydroxy-4-(hydroxymethyl)-7-methoxy-6-methylphthalide, which undergoes C-3 hydroxylation by the cytochrome P450 monooxygenase mfmF. The resultant cyclopolic acid (2,5-dihydroxy-4-(hydroxymethyl)-7-methoxy-6-methylphthalide) is then farnesylated by the DMATS-type prenyltransferase mfmD to afford 5-O-farnesylcyclopolic acid. Finally, the Pyr4-family terpene cyclase mfmH cyclizes the farnesyl moiety of 5-O-farnesylcyclopolic acid into a drimane-like structure, thus completing the biosynthesis of 11'-O-desmethylfendlerol. The protein is Cytochrome P450 monooxygenase mfmA of Annulohypoxylon moriforme (Filamentous fungus).